A 162-amino-acid chain; its full sequence is uncharacterized protein (162 aa).

It belongs to the LOR family.

This is an uncharacterized protein from Bacillus subtilis (strain 168).